The chain runs to 1131 residues: MRSRSSNAEGSAPKQIPRHSKFQDSIQDMKHRTHKKDPSCESEGVLPRPVSEKSHTGKGHHTEDLSRDDLLFLLSILEGELQARDEVIGILRAEKIDLALLEAQYGFVTPKKVLEALQRDAFQAKSAPWQEDIYEKPMNELDKVVEKHKESHRRILEQLLMVERSHRQTIMEMEEEKRKHKEYMKKSDEFINLLEQECERLKKLIDQETASQEKKEQEKEKRIKTLKEELTKLKSFALMVVDEQQRLTAQLALQRQKIQALTTSAKETQGKLALAEARAQEEEQKATRLEKELQTQTTEFHQNQDKIMAKLTNEDSQNRQLRQKLAALSRQIDELEETNRSLRKAEEELQDIKDKINKGEYGNSGIMDEVDELRKRVLDMEGKDEELIKMEEQCRDLNKRLEKETVQSKDFKLEVDKLSVRITALEKLEDALDKSKQECYSLKCNLEKEKMTTKQLSEELESLNARIKELEAIESRLEKTEITLKDDLTKLKTLTVMLVDERKTMSEKLKQTEDKLQSTTSQLQAEQNKVTTVTEKLIEETKRALKSKTDAEEKMYSVTKERDDLRNKLKAEEEKGHDLLSKVTILKNRLQSLEAIEKDFVKNKLNQDSSKSTAALHQENNKIKELSQEVENLKLKLKDMKAIEDDLMKTEDEYETLERRYANERDKAQFLSQELEHAKMELAKYKLAEKTESSHEQWLFRRLQEEEAKSGHLSREVDALKEKIHEYMATEDLICHLQGDHSLLQKKLNQQENRNRDLGREIENLTKELERYRHFSKSLRPSLNGRRISDPQVFSKEVQTEAADSEPPDYKSLIPLERAVINGQFYEENEDQDDDPNEEESVLSFRCSQSSSLPMNRKLWIPWMKSKEGHPQNGKIQTKSNGNFVQPGDLVLSHTPGQPLHIKVTPDHIQNTATLEITSPTTESPHSYTSTAVIPNCGTPKQRITILQNASITPIKSKSSTESLMNLEQSMSPVTMATFARAQTPESCGSVTPERTMSPIQVLAMTGSPSSPEQGCSPEPIEISAKHAIFRVSPDRQSSWQFQRSNSNSSSVITTEDNKIHIHLGSPYMQAVAGPMRPASPSAPLQDNRTQGLTNGALNKTTNKVTSSITITPTATPLPRQSQITVSNIYN.

Positions 1 to 62 (MRSRSSNAEG…KSHTGKGHHT (62 aa)) are disordered. The span at 50-62 (VSEKSHTGKGHHT) shows a compositional bias: basic and acidic residues. Coiled-coil stretches lie at residues 139–583 (NELD…LSKV) and 610–780 (SKST…KSLR). Ser789 carries the phosphoserine modification. 2 positions are modified to phosphothreonine: Thr984 and Thr992. Ser1050 carries the post-translational modification Phosphoserine.

The protein belongs to the FILIP1 family.

It localises to the cytoplasm. It is found in the membrane. Its subcellular location is the nucleus. Its function is as follows. Acts as a regulator of the antiangiogenic activity on endothelial cells. When overexpressed in endothelial cells, leads to inhibition of cell proliferation and migration and an increase in apoptosis. Inhibits melanoma growth When expressed in tumor-associated vasculature. The protein is Filamin A-interacting protein 1-like (Filip1l) of Mus musculus (Mouse).